We begin with the raw amino-acid sequence, 425 residues long: Serine--tRNA ligase (425 aa).

An L-serine-binding site is contributed by 233–235 (TAE). 264-266 (RRE) contributes to the ATP binding site. L-serine is bound at residue Glu287. 351 to 354 (EISS) is a binding site for ATP. L-serine is bound at residue Ser385.

This sequence belongs to the class-II aminoacyl-tRNA synthetase family. Type-1 seryl-tRNA synthetase subfamily. In terms of assembly, homodimer. The tRNA molecule binds across the dimer.

It is found in the cytoplasm. The catalysed reaction is tRNA(Ser) + L-serine + ATP = L-seryl-tRNA(Ser) + AMP + diphosphate + H(+). The enzyme catalyses tRNA(Sec) + L-serine + ATP = L-seryl-tRNA(Sec) + AMP + diphosphate + H(+). The protein operates within aminoacyl-tRNA biosynthesis; selenocysteinyl-tRNA(Sec) biosynthesis; L-seryl-tRNA(Sec) from L-serine and tRNA(Sec): step 1/1. Catalyzes the attachment of serine to tRNA(Ser). Is also able to aminoacylate tRNA(Sec) with serine, to form the misacylated tRNA L-seryl-tRNA(Sec), which will be further converted into selenocysteinyl-tRNA(Sec). The chain is Serine--tRNA ligase from Synechococcus sp. (strain WH7803).